Here is a 698-residue protein sequence, read N- to C-terminus: SHC SH2 domain-binding protein 1 homolog B (698 aa).

PbH1 repeat units follow at residues 480–502 (CAELLMKYSDLYGAKGAGMEIYP), 503–524 (GSKCTLIGNGIHHCRDGILIKD), and 532–554 (IPKIIMENNVIHNNEGYAVVLVK).

The protein localises to the midbody. Its subcellular location is the cytoplasm. The protein resides in the cytoskeleton. It localises to the spindle. May play a role in signaling pathways governing cellular proliferation. The polypeptide is SHC SH2 domain-binding protein 1 homolog B (shcbp1-b) (Xenopus laevis (African clawed frog)).